Reading from the N-terminus, the 355-residue chain is Peptide chain release factor 1 (355 aa).

At Gln233 the chain carries N5-methylglutamine. Basic and acidic residues predominate over residues Arg282–Arg293. The interval Arg282–Ile305 is disordered.

The protein belongs to the prokaryotic/mitochondrial release factor family. In terms of processing, methylated by PrmC. Methylation increases the termination efficiency of RF1.

The protein resides in the cytoplasm. Its function is as follows. Peptide chain release factor 1 directs the termination of translation in response to the peptide chain termination codons UAG and UAA. The chain is Peptide chain release factor 1 from Rickettsia rickettsii (strain Iowa).